The primary structure comprises 85 residues: Small ribosomal subunit protein bS20 (85 aa).

This sequence belongs to the bacterial ribosomal protein bS20 family.

Its function is as follows. Binds directly to 16S ribosomal RNA. In Borrelia turicatae (strain 91E135), this protein is Small ribosomal subunit protein bS20.